Here is a 433-residue protein sequence, read N- to C-terminus: Probable glycine dehydrogenase (decarboxylating) subunit 1 (433 aa).

The protein belongs to the GcvP family. N-terminal subunit subfamily. The glycine cleavage system is composed of four proteins: P, T, L and H. In this organism, the P 'protein' is a heterodimer of two subunits.

The catalysed reaction is N(6)-[(R)-lipoyl]-L-lysyl-[glycine-cleavage complex H protein] + glycine + H(+) = N(6)-[(R)-S(8)-aminomethyldihydrolipoyl]-L-lysyl-[glycine-cleavage complex H protein] + CO2. In terms of biological role, the glycine cleavage system catalyzes the degradation of glycine. The P protein binds the alpha-amino group of glycine through its pyridoxal phosphate cofactor; CO(2) is released and the remaining methylamine moiety is then transferred to the lipoamide cofactor of the H protein. This Thermoplasma acidophilum (strain ATCC 25905 / DSM 1728 / JCM 9062 / NBRC 15155 / AMRC-C165) protein is Probable glycine dehydrogenase (decarboxylating) subunit 1.